A 365-amino-acid polypeptide reads, in one-letter code: Protein Tob1 (365 aa).

A Bipartite nuclear localization signal motif is present at residues 22 to 39 (RRRVNIFGEELERLLKQK). An important for nuclear localization region spans residues 82-92 (VRGNLPQDLSV). Residues 144-160 (DPASSVSSSPSPPFGHS) are compositionally biased toward low complexity. The tract at residues 144–171 (DPASSVSSSPSPPFGHSAAVSPTFMPRS) is disordered. The tract at residues 161 to 220 (AAVSPTFMPRSTQPLTFTTATFAATKFGSTKMKNSGRSSKVARTSPISLGLNVNVNDLLK) is required for interaction with CPEB3. Thr-204 bears the Phosphothreonine mark. The Nuclear export signal signature appears at 228 to 236 (MHSLYGLGL). The segment at 233-287 (GLGLGSQQQPQPQPQQPPSQPPPPPPPPQQQQQHQQQQQQQQQQQQQPQQQTSAL) is disordered. Positions 243 to 261 (QPQPQQPPSQPPPPPPPPQ) are enriched in pro residues. Residues 262-283 (QQQQHQQQQQQQQQQQQQPQQQ) are compositionally biased toward low complexity.

The protein belongs to the BTG family. In terms of assembly, interacts with ERBB2. Interacts with CNOT7. Interacts with CPEB3 (via C-terminal RNA-binding region); recruits CNOT7 to CPEB3 to form a ternary complex required for mRNA deadenylation and decay. Interacts with CNOT8. Interacts with CPEB4. In terms of processing, phosphorylated on Ser and Thr residues.

Its subcellular location is the cytoplasm. The protein resides in the nucleus. Its function is as follows. Anti-proliferative protein; the function is mediated by association with deadenylase subunits of the CCR4-NOT complex. Mediates CPEB3-accelerated mRNA deadenylation by binding to CPEB3 and recruiting CNOT7 which leads to target mRNA deadenylation and decay. The chain is Protein Tob1 (Tob1) from Rattus norvegicus (Rat).